The primary structure comprises 362 residues: Biotin synthase (362 aa).

Residues 46 to 273 (NEVQVSTLLS…ASHVRLSAGR (228 aa)) form the Radical SAM core domain. Cysteine 61, cysteine 65, and cysteine 68 together coordinate [4Fe-4S] cluster. [2Fe-2S] cluster is bound by residues cysteine 105, cysteine 136, cysteine 196, and arginine 268. A disordered region spans residues 320–339 (PAQRAQKPDQVQEEELLAEV).

The protein belongs to the radical SAM superfamily. Biotin synthase family. In terms of assembly, homodimer. Requires [4Fe-4S] cluster as cofactor. It depends on [2Fe-2S] cluster as a cofactor.

It catalyses the reaction (4R,5S)-dethiobiotin + (sulfur carrier)-SH + 2 reduced [2Fe-2S]-[ferredoxin] + 2 S-adenosyl-L-methionine = (sulfur carrier)-H + biotin + 2 5'-deoxyadenosine + 2 L-methionine + 2 oxidized [2Fe-2S]-[ferredoxin]. It participates in cofactor biosynthesis; biotin biosynthesis; biotin from 7,8-diaminononanoate: step 2/2. Its function is as follows. Catalyzes the conversion of dethiobiotin (DTB) to biotin by the insertion of a sulfur atom into dethiobiotin via a radical-based mechanism. This Aeromonas hydrophila subsp. hydrophila (strain ATCC 7966 / DSM 30187 / BCRC 13018 / CCUG 14551 / JCM 1027 / KCTC 2358 / NCIMB 9240 / NCTC 8049) protein is Biotin synthase.